Reading from the N-terminus, the 713-residue chain is Probable tRNA (uracil-O(2)-)-methyltransferase (713 aa).

Disordered stretches follow at residues 49–92 and 480–508; these read TLRS…REGT and LHSR…HDAG. Phosphoserine is present on serine 76. Residues 79 to 89 show a composition bias toward basic and acidic residues; that stretch reads GEPESGPRASR. Serine 489 is modified (phosphoserine). A C3H1-type zinc finger spans residues 669 to 698; that stretch reads FKTRICWFFAHHPDGCVLPAAQCPFAHGPE.

Belongs to the TRM44 family.

It localises to the cytoplasm. It carries out the reaction uridine(44) in tRNA(Ser) + S-adenosyl-L-methionine = 2'-O-methyluridine(44) in tRNA(Ser) + S-adenosyl-L-homocysteine + H(+). Its function is as follows. Probable adenosyl-L-methionine (AdoMet)-dependent tRNA (uracil-O(2)-)-methyltransferase. The chain is Probable tRNA (uracil-O(2)-)-methyltransferase (Trmt44) from Mus musculus (Mouse).